The sequence spans 236 residues: Small ribosomal subunit protein uS2c (236 aa).

It belongs to the universal ribosomal protein uS2 family.

The protein localises to the plastid. Its subcellular location is the chloroplast. In Lolium perenne (Perennial ryegrass), this protein is Small ribosomal subunit protein uS2c (rps2).